Here is a 408-residue protein sequence, read N- to C-terminus: MSLNNLSNSYNQYLAQESHQILRHLFLNKQYSPLVKRDDDSSATVTCGGDANEFNEYGHLGYRIGAIFVILATSLIGMNLPLVLSKITKNRPNVYIEYLYLFARYFGSGVILATAFIHLLAPACNKLYDPCLDDLFGGYDWAPGICLISCWFILLLEVLLNRYVEWRFGMEIGDHHGPTLGAKQHSHSHEDGAHGVHEHPVYDIEECADGVEHECVKDDLEEVKLEPYTNTDSTDLTTKEEARSFLLKQQLTAFIILESSIILHSVIIGLTTAVSGEEFKTLFPVIIFHQAFEGCGLGSRLAGMAWGPKTAWVPWVLGVIYSLVTPIGMAAGLGVREHWDPLAHGSYAAQGVLDAISSGILVYAGLVELLAHDFLFSPERERNWYKLIYLLACSMAGTGVMALLGKWA.

3 helical membrane-spanning segments follow: residues 64–84 (IGAI…PLVL), 101–121 (LFAR…HLLA), and 141–161 (WAPG…VLLN). 2 positions are modified to phosphothreonine: T234 and T237. 5 helical membrane-spanning segments follow: residues 254–274 (FIIL…TTAV), 279–299 (FKTL…GLGS), 315–335 (WVLG…GLGV), 351–371 (GVLD…ELLA), and 387–407 (LIYL…LGKW).

It belongs to the ZIP transporter (TC 2.A.5) family.

It is found in the endoplasmic reticulum membrane. Functionally, high-affinity zinc transport protein. Regulates intracellular zinc levels. This chain is Zinc-regulated transporter 1 (zrt1), found in Schizosaccharomyces pombe (strain 972 / ATCC 24843) (Fission yeast).